The primary structure comprises 369 residues: Spore membrane assembly protein 2 (369 aa).

Residues 1–6 (MLFPKR) lie on the Cytoplasmic side of the membrane. Residues 7 to 27 (LIVWGVLLILSLSQFVLYLPA) traverse the membrane as a helical segment. The Lumenal portion of the chain corresponds to 28–220 (TTCTNSKGLR…NLAFILMMFN (193 aa)). Residues 221-241 (GMVFYFAVLEIIVGFLSICVV) form a helical membrane-spanning segment. At 242 to 265 (SAFGGALSVGKRHRLFPMLLKSSS) the chain is on the cytoplasmic side. A helical transmembrane segment spans residues 266–286 (SILVVIATLTILCNIVYLIAL). Topologically, residues 287–319 (KTLEPEEVTDVGSDNAAVHTTGWELLKVNVGSG) are lumenal. A helical transmembrane segment spans residues 320–340 (FIMGLARYAIQWVLLVLAFLA). Topologically, residues 341–369 (ANHYKAKPKKSDKYTEDTSNSPSPDLMEK) are cytoplasmic. The segment at 348–369 (PKKSDKYTEDTSNSPSPDLMEK) is disordered.

The protein belongs to the SMA2 family.

The protein localises to the prospore membrane. It localises to the endoplasmic reticulum. Its function is as follows. Involved in spore and ascus formation. Required for the efficient assembly of the precursors of the prospore membrane to a continuous prospore membrane. This Saccharomyces cerevisiae (strain ATCC 204508 / S288c) (Baker's yeast) protein is Spore membrane assembly protein 2 (SMA2).